The sequence spans 212 residues: MGLHLGLIDYGMGNLHSVEKAFNRLGHQPSRVVNPSDLDGCDALVLPGVGSFDPAIDNLQSTGLIPDLKRWNEADRPLLGICLGLQLLFESSAEGRLEGLGLIKGHVERLPIGAGARIPHMGWAPLDLRRANPMLAAADPLAWVYFVHSYAAVPERPETLAAAASFGSSSVTAMVWQRRLGACQFHPEKSSDSGSAMLKRWLDWLQRGAPIG.

Residues 4 to 211 (HLGLIDYGMG…LDWLQRGAPI (208 aa)) enclose the Glutamine amidotransferase type-1 domain. Residue Cys-82 is the Nucleophile of the active site. Residues His-186 and Glu-188 contribute to the active site.

In terms of assembly, heterodimer of HisH and HisF.

Its subcellular location is the cytoplasm. It catalyses the reaction 5-[(5-phospho-1-deoxy-D-ribulos-1-ylimino)methylamino]-1-(5-phospho-beta-D-ribosyl)imidazole-4-carboxamide + L-glutamine = D-erythro-1-(imidazol-4-yl)glycerol 3-phosphate + 5-amino-1-(5-phospho-beta-D-ribosyl)imidazole-4-carboxamide + L-glutamate + H(+). The catalysed reaction is L-glutamine + H2O = L-glutamate + NH4(+). It functions in the pathway amino-acid biosynthesis; L-histidine biosynthesis; L-histidine from 5-phospho-alpha-D-ribose 1-diphosphate: step 5/9. IGPS catalyzes the conversion of PRFAR and glutamine to IGP, AICAR and glutamate. The HisH subunit provides the glutamine amidotransferase activity that produces the ammonia necessary to HisF for the synthesis of IGP and AICAR. The chain is Imidazole glycerol phosphate synthase subunit HisH 2 (hisH2) from Parasynechococcus marenigrum (strain WH8102).